The sequence spans 1132 residues: Phosphatidylinositide phosphatase SAC2 (1132 aa).

Residues 167–518 (LKMFMDSESF…GDSISRQYAG (352 aa)) enclose the SAC domain. One can recognise a hSac2 domain in the interval 593–760 (RSHQELISQL…KSSKPHEDII (168 aa)). Phosphoserine occurs at positions 827 and 830. Residues 846 to 875 (ESDGDMSSDNDSYHSDEFLTNSKSDEDRQL) are disordered. Basic and acidic residues predominate over residues 856–874 (DSYHSDEFLTNSKSDEDRQ). Phosphoserine occurs at positions 878, 881, 907, and 910. Disordered stretches follow at residues 923–942 (VAHG…KSPS) and 974–1017 (LSET…LDVS). Serine 1103 carries the post-translational modification Phosphoserine.

As to quaternary structure, homodimer. Interacts with OCRL and RAB5A. Interacts with INPP5B and INPP4A. Interacts with STAT3; the interaction is independent of STAT3 'Tyr-705' phosphorylation status. As to expression, ubiquitous. Highly expressed in brain.

It is found in the membrane. Its subcellular location is the clathrin-coated pit. It localises to the early endosome. The protein resides in the recycling endosome. The catalysed reaction is a myo-inositol phosphate + H2O = myo-inositol + phosphate. In terms of biological role, inositol 4-phosphatase which mainly acts on phosphatidylinositol 4-phosphate. May be functionally linked to OCRL, which converts phosphatidylinositol 4,5-bisphosphate to phosphatidylinositol, for a sequential dephosphorylation of phosphatidylinositol 4,5-bisphosphate at the 5 and 4 position of inositol, thus playing an important role in the endocytic recycling. Regulator of TF:TFRC and integrins recycling pathway, is also involved in cell migration mechanisms. Modulates AKT/GSK3B pathway by decreasing AKT and GSK3B phosphorylation. Negatively regulates STAT3 signaling pathway through inhibition of STAT3 phosphorylation and translocation to the nucleus. Functionally important modulator of cardiac myocyte size and of the cardiac response to stress. May play a role as negative regulator of axon regeneration after central nervous system injuries. This Homo sapiens (Human) protein is Phosphatidylinositide phosphatase SAC2.